Here is a 518-residue protein sequence, read N- to C-terminus: Suppressor of hairless homolog (518 aa).

The segment at 22–59 (ETDQQRSHVKERVNGTPNQNGGTSTSSKPRSVFENRPP) is disordered. Residues 24–34 (DQQRSHVKERV) show a composition bias toward basic and acidic residues. The span at 36 to 50 (GTPNQNGGTSTSSKP) shows a compositional bias: polar residues. 3 consecutive DNA-binding regions follow at residues 89–96 (KSYGNEKR), 223–232 (RLRSQTVSTR), and 296–328 (RKVDKQTAILNADDPVSQLHKCAFYLKDSERMY). In terms of domain architecture, IPT/TIG spans 386-476 (PVVHSLQLNG…YPTNLTFTFT (91 aa)).

The protein belongs to the Su(H) family. As to quaternary structure, interacts with activated Notch proteins.

Its subcellular location is the nucleus. In terms of biological role, transcriptional regulator that plays a central role in Notch signaling, a signaling pathway involved in cell-cell communication that regulates a broad spectrum of cell-fate determinations. Acts as a transcriptional repressor when it is not associated with Notch proteins. When associated with some Notch protein, it acts as a transcriptional activator that activates transcription of Notch target genes. The chain is Suppressor of hairless homolog (RBP-JK) from Halocynthia roretzi (Sea squirt).